The primary structure comprises 254 residues: Acidic endochitinase (254 aa).

A signal peptide spans 1 to 23; that stretch reads MKFWGSVLALSFVVFLFLTGTLA. Glu91 functions as the Proton donor in the catalytic mechanism. An intrachain disulfide couples Cys213 to Cys245.

Belongs to the glycosyl hydrolase 19 family. Chitinase class II subfamily.

The protein resides in the secreted. The enzyme catalyses Random endo-hydrolysis of N-acetyl-beta-D-glucosaminide (1-&gt;4)-beta-linkages in chitin and chitodextrins.. Functionally, defense against chitin-containing fungal pathogens. This is Acidic endochitinase from Petunia hybrida (Petunia).